Consider the following 485-residue polypeptide: Aspartyl/glutamyl-tRNA(Asn/Gln) amidotransferase subunit B (485 aa).

This sequence belongs to the GatB/GatE family. GatB subfamily. As to quaternary structure, heterotrimer of A, B and C subunits.

The catalysed reaction is L-glutamyl-tRNA(Gln) + L-glutamine + ATP + H2O = L-glutaminyl-tRNA(Gln) + L-glutamate + ADP + phosphate + H(+). It catalyses the reaction L-aspartyl-tRNA(Asn) + L-glutamine + ATP + H2O = L-asparaginyl-tRNA(Asn) + L-glutamate + ADP + phosphate + 2 H(+). Its function is as follows. Allows the formation of correctly charged Asn-tRNA(Asn) or Gln-tRNA(Gln) through the transamidation of misacylated Asp-tRNA(Asn) or Glu-tRNA(Gln) in organisms which lack either or both of asparaginyl-tRNA or glutaminyl-tRNA synthetases. The reaction takes place in the presence of glutamine and ATP through an activated phospho-Asp-tRNA(Asn) or phospho-Glu-tRNA(Gln). The polypeptide is Aspartyl/glutamyl-tRNA(Asn/Gln) amidotransferase subunit B (Opitutus terrae (strain DSM 11246 / JCM 15787 / PB90-1)).